Reading from the N-terminus, the 333-residue chain is Holliday junction branch migration complex subunit RuvB (333 aa).

The tract at residues 1–181 (MNDILNKEPM…FGISSHMEYY (181 aa)) is large ATPase domain (RuvB-L). Residues leucine 20, arginine 21, glycine 62, lysine 65, threonine 66, threonine 67, 128 to 130 (EDF), arginine 171, tyrosine 181, and arginine 218 contribute to the ATP site. Residue threonine 66 coordinates Mg(2+). The interval 182–252 (QERDLEEIVK…ITDKALSILD (71 aa)) is small ATPAse domain (RuvB-S). The segment at 255-333 (AAGLDYIDQK…HLGYVYNEED (79 aa)) is head domain (RuvB-H). Arginine 291, arginine 310, and arginine 315 together coordinate DNA.

It belongs to the RuvB family. As to quaternary structure, homohexamer. Forms an RuvA(8)-RuvB(12)-Holliday junction (HJ) complex. HJ DNA is sandwiched between 2 RuvA tetramers; dsDNA enters through RuvA and exits via RuvB. An RuvB hexamer assembles on each DNA strand where it exits the tetramer. Each RuvB hexamer is contacted by two RuvA subunits (via domain III) on 2 adjacent RuvB subunits; this complex drives branch migration. In the full resolvosome a probable DNA-RuvA(4)-RuvB(12)-RuvC(2) complex forms which resolves the HJ.

The protein resides in the cytoplasm. It catalyses the reaction ATP + H2O = ADP + phosphate + H(+). Its function is as follows. The RuvA-RuvB-RuvC complex processes Holliday junction (HJ) DNA during genetic recombination and DNA repair, while the RuvA-RuvB complex plays an important role in the rescue of blocked DNA replication forks via replication fork reversal (RFR). RuvA specifically binds to HJ cruciform DNA, conferring on it an open structure. The RuvB hexamer acts as an ATP-dependent pump, pulling dsDNA into and through the RuvAB complex. RuvB forms 2 homohexamers on either side of HJ DNA bound by 1 or 2 RuvA tetramers; 4 subunits per hexamer contact DNA at a time. Coordinated motions by a converter formed by DNA-disengaged RuvB subunits stimulates ATP hydrolysis and nucleotide exchange. Immobilization of the converter enables RuvB to convert the ATP-contained energy into a lever motion, pulling 2 nucleotides of DNA out of the RuvA tetramer per ATP hydrolyzed, thus driving DNA branch migration. The RuvB motors rotate together with the DNA substrate, which together with the progressing nucleotide cycle form the mechanistic basis for DNA recombination by continuous HJ branch migration. Branch migration allows RuvC to scan DNA until it finds its consensus sequence, where it cleaves and resolves cruciform DNA. The protein is Holliday junction branch migration complex subunit RuvB of Lactococcus lactis subsp. lactis (strain IL1403) (Streptococcus lactis).